Consider the following 503-residue polypeptide: Glycoprotein 3-alpha-L-fucosyltransferase A (503 aa).

Residues 1–10 (MRRPKISLKK) lie on the Cytoplasmic side of the membrane. Residues 11–28 (YFYLTLICALLLIFGFSL) form a helical; Signal-anchor for type II membrane protein membrane-spanning segment. Residues 29–503 (KEREIWKTLS…KDVISDSSDD (475 aa)) are Lumenal-facing. The disordered stretch occupies residues 44-71 (ITTQQQQHQHLHQLQSMDEEHPMATSST). The segment covering 47-58 (QQQQHQHLHQLQ) has biased composition (low complexity). N-linked (GlcNAc...) asparagine glycans are attached at residues Asn262, Asn295, and Asn299.

The protein belongs to the glycosyltransferase 10 family. Mn(2+) serves as cofactor.

The protein resides in the golgi apparatus. The protein localises to the golgi stack membrane. It catalyses the reaction N(4)-{beta-D-GlcNAc-(1-&gt;2)-alpha-D-Man-(1-&gt;3)-[beta-D-GlcNAc-(1-&gt;2)-alpha-D-Man-(1-&gt;6)]-beta-D-Man-(1-&gt;4)-beta-D-GlcNAc-(1-&gt;4)-beta-D-GlcNAc}-L-asparaginyl-[protein] + GDP-beta-L-fucose = N(4)-{beta-D-GlcNAc-(1-&gt;2)-alpha-D-Man-(1-&gt;3)-[beta-D-GlcNAc-(1-&gt;2)-alpha-D-Man-(1-&gt;6)]-beta-D-Man-(1-&gt;4)-beta-D-GlcNAc-(1-&gt;4)-[alpha-L-Fuc(1-&gt;3)]-beta-D-GlcNAc}-L-asparaginyl-[protein] + GDP + H(+). Its pathway is protein modification; protein glycosylation. Functionally, catalyzes alpha-1,3 glycosidic linkages of N-glycans. Plays a role in neuronal development by promoting ventral nerve cord formation, possibly by promoting interactions between migrating cells and the extracellular matrix or by promoting neural activity. This is Glycoprotein 3-alpha-L-fucosyltransferase A (FucTA) from Drosophila melanogaster (Fruit fly).